The sequence spans 240 residues: Putative N-acetylmannosamine-6-phosphate 2-epimerase (240 aa).

This sequence belongs to the NanE family.

The enzyme catalyses an N-acyl-D-glucosamine 6-phosphate = an N-acyl-D-mannosamine 6-phosphate. It functions in the pathway amino-sugar metabolism; N-acetylneuraminate degradation; D-fructose 6-phosphate from N-acetylneuraminate: step 3/5. Functionally, converts N-acetylmannosamine-6-phosphate (ManNAc-6-P) to N-acetylglucosamine-6-phosphate (GlcNAc-6-P). The protein is Putative N-acetylmannosamine-6-phosphate 2-epimerase of Vibrio cholerae serotype O1 (strain ATCC 39541 / Classical Ogawa 395 / O395).